The following is a 369-amino-acid chain: Mycofactocin maturase MftC (369 aa).

The Radical SAM core domain occupies 16–232 (LDAPICLTWE…KGERVLTGDS (217 aa)). Positions 30, 34, 37, 251, 258, 269, 310, 313, 319, 323, and 341 each coordinate [4Fe-4S] cluster. The segment at 347–369 (APALAQERHAPRPRVDHSRGSRE) is disordered. A compositionally biased stretch (basic and acidic residues) spans 352–369 (QERHAPRPRVDHSRGSRE).

The protein belongs to the radical SAM superfamily. MftC family. Interacts with MftB. [4Fe-4S] cluster is required as a cofactor.

The enzyme catalyses [mycofactocin precursor peptide]-C-terminal glycyl-L-valyl-L-tyrosine + S-adenosyl-L-methionine = [mycofactocin precursor peptide]-C-terminal glycyl-N-{[2-(4-hydroxyphenyl)ethenyl]-3-methylbutanamide} + 5'-deoxyadenosine + L-methionine + CO2. The catalysed reaction is [mycofactocin precursor peptide]-C-terminal glycyl-N-{[2-(4-hydroxyphenyl)ethenyl]-3-methylbutanamide} + AH2 + S-adenosyl-L-methionine = [mycofactocin precursor peptide]-C-terminal glycyl-N-{5-[(4-hydroxyphenyl)methyl]-4,4-dimethyl-2-oxopyrrolidin-3-yl}acetamide + 5'-deoxyadenosine + L-methionine + A + H(+). Its function is as follows. Radical S-adenosylmethionine (SAM) enzyme responsible for the first step of the biosynthesis of the enzyme cofactor mycofactocin (MFT). Catalyzes two reactions at the C-terminus of the mycofactocin precursor (the MftA peptide). The first one is the oxidative decarboxylation of the C-terminal L-tyrosine of MftA, forming an unsaturated tyramine moiety. The second reaction is the cross-linking of the tyramine with the penultimate L-valine residue, forming a five-membered lactam ring. Its activity requires the presence of the MftB chaperone. The sequence is that of Mycofactocin maturase MftC from Mycobacterium ulcerans (strain Agy99).